The primary structure comprises 23 residues: Acidic phospholipase A2 Ts-A2 (23 aa).

Ca(2+) serves as cofactor. Post-translationally, contains 7 disulfide bonds. As to expression, expressed by the venom gland.

It localises to the secreted. The catalysed reaction is a 1,2-diacyl-sn-glycero-3-phosphocholine + H2O = a 1-acyl-sn-glycero-3-phosphocholine + a fatty acid + H(+). In terms of biological role, exhibits moderate hydrolytic activities and prefers the anionic micelles (dPPC with deoxycholate) to the zwitterionic micelles (dPPC with Triton X-100). PLA2 catalyzes the calcium-dependent hydrolysis of the 2-acyl groups in 3-sn-phosphoglycerides. This Trimeresurus stejnegeri (Chinese green tree viper) protein is Acidic phospholipase A2 Ts-A2.